We begin with the raw amino-acid sequence, 802 residues long: Sucrose synthase 1 (802 aa).

The GT-B glycosyltransferase stretch occupies residues 272-749 (MMFNVVILSP…GLQRIYEKYT (478 aa)).

Belongs to the glycosyltransferase 1 family. Plant sucrose synthase subfamily.

The catalysed reaction is an NDP-alpha-D-glucose + D-fructose = a ribonucleoside 5'-diphosphate + sucrose + H(+). In terms of biological role, sucrose-cleaving enzyme that provides UDP-glucose and fructose for various metabolic pathways. Most active in the sink tissues where it is responsible for the breakdown of the arriving sucrose. The chain is Sucrose synthase 1 (SH-1) from Zea mays (Maize).